The primary structure comprises 931 residues: Bifunctional glutamine synthetase adenylyltransferase/adenylyl-removing enzyme (931 aa).

Residues 1–434 (MTLAPADLPA…STEFAALLAP (434 aa)) form an adenylyl removase region. Residues 441 to 931 (PDALANYWRS…ACIAAELPFA (491 aa)) form an adenylyl transferase region.

This sequence belongs to the GlnE family. Requires Mg(2+) as cofactor.

The enzyme catalyses [glutamine synthetase]-O(4)-(5'-adenylyl)-L-tyrosine + phosphate = [glutamine synthetase]-L-tyrosine + ADP. It catalyses the reaction [glutamine synthetase]-L-tyrosine + ATP = [glutamine synthetase]-O(4)-(5'-adenylyl)-L-tyrosine + diphosphate. Functionally, involved in the regulation of glutamine synthetase GlnA, a key enzyme in the process to assimilate ammonia. When cellular nitrogen levels are high, the C-terminal adenylyl transferase (AT) inactivates GlnA by covalent transfer of an adenylyl group from ATP to specific tyrosine residue of GlnA, thus reducing its activity. Conversely, when nitrogen levels are low, the N-terminal adenylyl removase (AR) activates GlnA by removing the adenylyl group by phosphorolysis, increasing its activity. The regulatory region of GlnE binds the signal transduction protein PII (GlnB) which indicates the nitrogen status of the cell. This chain is Bifunctional glutamine synthetase adenylyltransferase/adenylyl-removing enzyme, found in Stenotrophomonas maltophilia (strain R551-3).